A 299-amino-acid chain; its full sequence is Putative beta-glucosidase 2 (299 aa).

Residues 1–16 form the signal peptide; the sequence is MLHCITTIFLSISRMT. 49 to 50 lines the a beta-D-glucoside pocket; that stretch reads NE. The active-site Proton donor is Glu-50. Cysteines 69 and 72 form a disulfide. 2 N-linked (GlcNAc...) asparagine glycosylation sites follow: Asn-71 and Asn-76. A beta-D-glucoside is bound at residue Tyr-189. Residue Asn-222 is glycosylated (N-linked (GlcNAc...) asparagine). Glu-255 is a binding site for a beta-D-glucoside. Glu-255 serves as the catalytic Nucleophile. N-linked (GlcNAc...) asparagine glycosylation is present at Asn-290.

It belongs to the glycosyl hydrolase 1 family.

It catalyses the reaction Hydrolysis of terminal, non-reducing beta-D-glucosyl residues with release of beta-D-glucose.. This Arabidopsis thaliana (Mouse-ear cress) protein is Putative beta-glucosidase 2.